The following is a 425-amino-acid chain: MAAAKPHMNLAVIGHIDHGKSTTVGRILFETGVVQQHILDGYKKEAESKGKATFEFAWVMDSLKEERERGITIDIAHKKFETPKYNFTVVDCPGHRDFVKNMITGASQADAAIIVVSGTEGPMEQTKEHVFLSKTLGINQIIVAINKMDAVNYSEEKYNEAKDKMTKLIMSVGFKPAETPFIPISAFCGDNIKEASANTPWYKGPTLLAALDLFKMPDMPTDKPLRLPIQDVYTISGVGTVPVGRVETGILKKGQKISFMPANVTGEVKSIEMHHEEFPEALPGDNVGFNVRGIAKNDVRRGDVCGPIENPPTVAEEFTAQVVVLQHPSVLSVGYTPVFHCHTSQTACMFTELNKKLDPRSGQVKEENPAFLKAGDAAICTITPTRPLVIETAKELPQLGRFAVRDMGMTVAAGLVLSVKAKQMR.

The tr-type G domain occupies lysine 5–threonine 221. The segment at glycine 14–serine 21 is G1. Glycine 14–serine 21 is a GTP binding site. A Mg(2+)-binding site is contributed by serine 21. The G2 stretch occupies residues glycine 70 to aspartate 74. The interval aspartate 91 to glycine 94 is G3. GTP contacts are provided by residues aspartate 91–histidine 95 and asparagine 146–aspartate 149. Residues asparagine 146–aspartate 149 form a G4 region. The tract at residues serine 185–phenylalanine 187 is G5.

This sequence belongs to the TRAFAC class translation factor GTPase superfamily. Classic translation factor GTPase family. EF-Tu/EF-1A subfamily.

The protein resides in the cytoplasm. The catalysed reaction is GTP + H2O = GDP + phosphate + H(+). GTP hydrolase that promotes the GTP-dependent binding of aminoacyl-tRNA to the A-site of ribosomes during protein biosynthesis. The polypeptide is Elongation factor 1-alpha (Methanocorpusculum labreanum (strain ATCC 43576 / DSM 4855 / Z)).